Reading from the N-terminus, the 95-residue chain is Cell division topological specificity factor (95 aa).

The protein belongs to the MinE family.

Its function is as follows. Prevents the cell division inhibition by proteins MinC and MinD at internal division sites while permitting inhibition at polar sites. This ensures cell division at the proper site by restricting the formation of a division septum at the midpoint of the long axis of the cell. The protein is Cell division topological specificity factor of Methylorubrum extorquens (strain CM4 / NCIMB 13688) (Methylobacterium extorquens).